The sequence spans 572 residues: Proline--tRNA ligase (572 aa).

The protein belongs to the class-II aminoacyl-tRNA synthetase family. ProS type 1 subfamily. As to quaternary structure, homodimer.

The protein resides in the cytoplasm. It catalyses the reaction tRNA(Pro) + L-proline + ATP = L-prolyl-tRNA(Pro) + AMP + diphosphate. In terms of biological role, catalyzes the attachment of proline to tRNA(Pro) in a two-step reaction: proline is first activated by ATP to form Pro-AMP and then transferred to the acceptor end of tRNA(Pro). As ProRS can inadvertently accommodate and process non-cognate amino acids such as alanine and cysteine, to avoid such errors it has two additional distinct editing activities against alanine. One activity is designated as 'pretransfer' editing and involves the tRNA(Pro)-independent hydrolysis of activated Ala-AMP. The other activity is designated 'posttransfer' editing and involves deacylation of mischarged Ala-tRNA(Pro). The misacylated Cys-tRNA(Pro) is not edited by ProRS. This Caldicellulosiruptor saccharolyticus (strain ATCC 43494 / DSM 8903 / Tp8T 6331) protein is Proline--tRNA ligase.